Reading from the N-terminus, the 214-residue chain is Cell division protein B1 (214 aa).

In terms of biological role, part of a cell division machinery. This chain is Cell division protein B1, found in Sulfolobus acidocaldarius (strain ATCC 33909 / DSM 639 / JCM 8929 / NBRC 15157 / NCIMB 11770).